Consider the following 415-residue polypeptide: Isocitrate dehydrogenase [NADP] 1 (415 aa).

NADP(+) is bound at residue Thr104. 5 residues coordinate D-threo-isocitrate: Ser113, Asn115, Arg119, Arg129, and Arg153. Asp307 lines the Mg(2+) pocket. Residues 339 to 345 (HGTAPKY), Asn352, Tyr390, and Arg394 contribute to the NADP(+) site.

It belongs to the isocitrate and isopropylmalate dehydrogenases family. In terms of assembly, homodimer. Requires Mg(2+) as cofactor. The cofactor is Mn(2+).

The enzyme catalyses D-threo-isocitrate + NADP(+) = 2-oxoglutarate + CO2 + NADPH. In terms of biological role, catalyzes the oxidative decarboxylation of isocitrate to 2-oxoglutarate and carbon dioxide with the concomitant reduction of NADP(+). This Colwellia maris protein is Isocitrate dehydrogenase [NADP] 1.